A 720-amino-acid polypeptide reads, in one-letter code: Polyribonucleotide nucleotidyltransferase (720 aa).

Mg(2+)-binding residues include Asp487 and Asp493. Residues 554–613 (PRITTISIPKEKIREVIGTGGKVIREICEQTGAKIDIDDDGTIKVASVDADAAQRAIDWI) form the KH domain. One can recognise an S1 motif domain in the interval 623–691 (GVIYNGKVVK…DRGKVKLSMK (69 aa)). A disordered region spans residues 695–720 (QTTGEDISAQLEAERAASKRERHHED). Basic and acidic residues predominate over residues 706 to 720 (EAERAASKRERHHED).

This sequence belongs to the polyribonucleotide nucleotidyltransferase family. Mg(2+) serves as cofactor.

The protein localises to the cytoplasm. It catalyses the reaction RNA(n+1) + phosphate = RNA(n) + a ribonucleoside 5'-diphosphate. In terms of biological role, involved in mRNA degradation. Catalyzes the phosphorolysis of single-stranded polyribonucleotides processively in the 3'- to 5'-direction. This is Polyribonucleotide nucleotidyltransferase from Paramagnetospirillum magneticum (strain ATCC 700264 / AMB-1) (Magnetospirillum magneticum).